Reading from the N-terminus, the 94-residue chain is Integration host factor subunit beta (94 aa).

The protein belongs to the bacterial histone-like protein family. In terms of assembly, heterodimer of an alpha and a beta chain.

Its function is as follows. This protein is one of the two subunits of integration host factor, a specific DNA-binding protein that functions in genetic recombination as well as in transcriptional and translational control. This is Integration host factor subunit beta from Chelativorans sp. (strain BNC1).